The sequence spans 522 residues: Glucans biosynthesis protein G (522 aa).

A signal peptide spans 1 to 33 (MLVNILSKKPRAASVRWLGATVLFTLLTSPAWA).

It belongs to the OpgD/OpgG family.

It is found in the periplasm. It participates in glycan metabolism; osmoregulated periplasmic glucan (OPG) biosynthesis. Its function is as follows. Involved in the biosynthesis of osmoregulated periplasmic glucans (OPGs). The protein is Glucans biosynthesis protein G of Serratia proteamaculans (strain 568).